A 584-amino-acid chain; its full sequence is AP-1-like transcription factor yap1 (584 aa).

The disordered stretch occupies residues Leu23 to Leu179. A Bipartite nuclear localization signal motif is present at residues Gln35–Ser42. A compositionally biased stretch (basic and acidic residues) spans Gln36–Pro48. Residues Pro52–Asn67 show a composition bias toward low complexity. The short motif at Lys68–Gly75 is the Bipartite nuclear localization signal element. Residues Gly79–Phe94 show a composition bias toward acidic residues. Basic and acidic residues-rich tracts occupy residues Ser112–Ala144 and Ala170–Leu179. Residues Ser154–Tyr217 enclose the bZIP domain. A basic motif region spans residues Lys159–Lys180. Residues Leu182–Leu189 form a leucine-zipper region. The tract at residues Gln211–Asn332 is transcription activation 1. Disordered stretches follow at residues Ile267–Asn379 and Arg418–Pro441. Residues Ser284–Val296 form a n-CRD region. The segment covering Glu300–Gly309 has biased composition (polar residues). Residues Ser336–Ser362 show a composition bias toward low complexity. 2 stretches are compositionally biased toward polar residues: residues Asn363–Asn379 and Glu422–Gln437. A transcription activation 2 region spans residues Lys377 to Asp480. 3 cysteine pairs are disulfide-bonded: Cys531-Cys555, Cys531-Cys564, and Cys555-Cys564. A c-CRD region spans residues Cys531 to Cys564. A Nuclear export signal motif is present at residues Ile549–Ser556.

This sequence belongs to the bZIP family. YAP subfamily. Depending on the oxidative stress inducing agent, yap1 can undergo two distinct conformational changes, both involving disulfide bond formation, and both masking the nuclear export signal, thus abolishing nuclear export.

It is found in the nucleus. The protein resides in the cytoplasm. Functionally, transcription activator involved in oxidative stress response and redox homeostasis. Regulates the transcription of genes encoding antioxidant enzymes and components of the cellular thiol-reducing pathways. May be involved in antifungal resistance to voriconazole. The chain is AP-1-like transcription factor yap1 from Aspergillus flavus (strain ATCC 200026 / FGSC A1120 / IAM 13836 / NRRL 3357 / JCM 12722 / SRRC 167).